Consider the following 914-residue polypeptide: MAKTLKDLQGWEIITTDEQGNIIDGGQKRLRRRGAKTEHYLKRSSDGIKLGRGDSVVMHNEAAGTYSVYMIQELRLNTLNNVVELWALTYLRWFEVNPLAHYRQFNPDANILNRPLNYYNKLFSETANKNELYLTAELAELQLFNFIRVANVMDGSKWEVLKGNVDPERDFTVRYICEPTGEKFVDINIEDVKAYIKKVEPREAQEYLKDLTLPSKKKEIKRGPQKKDKATQTAQISDAETRATDITDNEDGNEDESSDYESPSDIDVSEDMDSGEISADELEEEEDEEEDEDEEEKEARHTNSPRKRGRKIKLGKDDIDASVQPPPKKRGRKPKDPSKPRQMLLISSCRANNTPVIRKFTKKNVARAKKKYTPFSKRFKSIAAIPDLTSLPEFYGNSSELMASRFENKLKTTQKHQIVETIFSKVKKQLNSSYVKEEILKSANFQDYLPARENEFASIYLSAYSAIESDSATTIYVAGTPGVGKTLTVREVVKELLSSSAQREIPDFLYVEINGLKMVKPTDCYETLWNKVSGERLTWAASMESLEFYFKRVPKNKKKTIVVLLDELDAMVTKSQDIMYNFFNWTTYENAKLIVIAVANTMDLPERQLGNKITSRIGFTRIMFTGYTHEELKNIIDLRLKGLNDSFFYVDTKTGNAILIDAAGNDTTVKQTLPEDVRKVRLRMSADAIEIASRKVASVSGDARRALKVCKRAAEIAEKHYMAKHGYGYDGKTVIEDENEEQIYDDEDKDLIESNKAKDDNDDDDDNDGVQTVHITHVMKALNETLNSHVITFMTRLSFTAKLFIYALLNLMKKNGSQEQELGDIVDEIKLLIEVNGSNKFVMEIAKTLFQQGSDNISEQLRIISWDFVLNQLLDAGILFKQTMKNDRICCVKLNISVEEAKRAMNEDETLRNL.

Residues 48 to 188 enclose the BAH domain; the sequence is IKLGRGDSVV…PTGEKFVDIN (141 aa). Residues 218 to 343 are disordered; the sequence is KEIKRGPQKK…PKDPSKPRQM (126 aa). Over residues 221-230 the composition is skewed to basic and acidic residues; sequence KRGPQKKDKA. Serine 237 carries the phosphoserine modification. The span at 247 to 296 shows a compositional bias: acidic residues; it reads TDNEDGNEDESSDYESPSDIDVSEDMDSGEISADELEEEEDEEEDEDEEE. Positions 303–313 are enriched in basic residues; sequence NSPRKRGRKIK. ATP-binding positions include valine 435 and 479-487; that span reads GTPGVGKTL. Aspartate 566 and glutamate 567 together coordinate Mg(2+). Residues glutamate 567, asparagine 600, arginine 704, and 726–733 contribute to the ATP site; that span reads GYGYDGKT.

Belongs to the ORC1 family. In terms of assembly, component of the origin recognition complex (ORC) composed of at least ORC1, ORC2, ORC3, ORC4, ORC5 and ORC6. Interacts with MCM10 and TAH11.

Its subcellular location is the nucleus. Functionally, component of the origin recognition complex (ORC) that binds origins of replication. It has a role in both chromosomal replication and mating type transcriptional silencing. Binds to the ARS consensus sequence (ACS) of origins of replication. In Saccharomyces cerevisiae (strain ATCC 204508 / S288c) (Baker's yeast), this protein is Origin recognition complex subunit 1 (ORC1).